A 156-amino-acid polypeptide reads, in one-letter code: MQHSQLSPNARQQLAETVILNKARLGLSWQDLADGTGLALTFVTAALLGQHALPEAAARKVAGQLGLDDDAVLLLQTIPLRGSIPGGIPTDPTIYRFYEMLQVYGSTLKALVHEQFGDGIISAINFKLDIQKVEDPEGGSRAVITLDGKYLPTKPF.

Residues Arg-96, Glu-99, and Ser-122 contribute to the active site.

It belongs to the cyanase family.

It carries out the reaction cyanate + hydrogencarbonate + 3 H(+) = NH4(+) + 2 CO2. Catalyzes the reaction of cyanate with bicarbonate to produce ammonia and carbon dioxide. The sequence is that of Cyanate hydratase from Pseudomonas paraeruginosa (strain DSM 24068 / PA7) (Pseudomonas aeruginosa (strain PA7)).